Consider the following 517-residue polypeptide: MDDPKIMNIMNGMKSLEDHCQLISDVKDESPMQMFYKDKGVFLTGGTGFFGKIIIEKLLRVTEVGQIYLLIRTKKGKDAFARIEDLFNDPVFAKMKQVNPKYRCQITIISGDCSLPGLGISADERETIMENVNIVLHSAATVRFDEKLKMAIAINVHGTKEIIKLAKEIVNLKALVHVSTAFAHCNMRHIQERFYSGTMSGENAFKLSECLDEHTLNTLTPTIIKGYPNTYTFTKVLAENVVQQSAQNLPVTIFRPGIVITTYREPVTGWIDNMYGPCGVIVGIGSGVLRVFTGDMDNKAHIVPVDMCVNALLASAWDIARNKYETPPIYNYVPDAENMVTWRRYMEDGFEYGCDIPMRKSIWYPRFTIVPHMWQYHILCFLYHTLPALVMDAIMVIIGKKPRMMKIYRKIHKLSNVLKYFSSNEFRFDNDNVRKLTEKLDDRDKRLFAFDMRDLDWTNLFRVSLYGLRLYVVKDDPSNIPESIKRYERLKVLHYTTLAVFYALAAWALYALLKLFL.

2 consecutive transmembrane segments (helical) span residues 378–398 (ILCF…MVII) and 492–512 (VLHY…LYAL).

The protein belongs to the fatty acyl-CoA reductase family.

It is found in the apical cell membrane. The enzyme catalyses a long-chain fatty acyl-CoA + 2 NADPH + 2 H(+) = a long-chain primary fatty alcohol + 2 NADP(+) + CoA. Functionally, catalyzes the reduction of saturated fatty acyl-CoA to fatty alcohols. The preferred substrates are C24:0 and C26:0. Necessary for the final stages of tracheal maturation, to facilitate the transition from water-filled to gas-filled tubes. May help to maintain the integrity of the outer hydrophobic envelope of the trachea. This chain is Fatty acyl-CoA reductase wat, found in Drosophila melanogaster (Fruit fly).